The following is a 542-amino-acid chain: Cytochrome P450 734A6 (542 aa).

The chain crosses the membrane as a helical span at residues 2-22; the sequence is GWWGWAAAAAAAAAWVAVKVL. Residue cysteine 474 participates in heme binding.

It belongs to the cytochrome P450 family. It depends on heme as a cofactor. In terms of tissue distribution, highly expressed in leaf sheaths. Expressed in roots, shoot apex, leaf blades, internodes and panicles.

The protein resides in the membrane. Its function is as follows. Cytochrome P450 involved in brassinosteroids (BRs) inactivation and regulation of BRs homeostasis. Is a multifunctional and multisubstrate enzyme that controls the endogenous bioactive BR content both by direct inactivation of castasterone (CS) and by decreasing the levels of BR precursors. Catalyzes the oxidation of carbon 22 hydroxylated BR intermediates to produce C26 oxidized metabolites. The sequence is that of Cytochrome P450 734A6 (CYP734A6) from Oryza sativa subsp. japonica (Rice).